Here is a 909-residue protein sequence, read N- to C-terminus: E3 ubiquitin-protein ligase HACE1 (909 aa).

The tract at residues 1-21 (MERAMEQLNRLTRSLRRARTV) is N-terminal helix important for homodimerization. 7 ANK repeats span residues 23-55 (LPED…NSKF), 64-93 (VKRS…NPNY), 97-126 (SGCT…DVNI), 130-159 (EGLT…DVDV), 163-192 (MGQT…DINR), 196-226 (SGAT…YLPD), and 228-253 (NGVT…QYHP). The tract at residues 398–433 (QDQDAASIPPFEPPGPGSYENLSTGTRESKPDALAG) is disordered. The HECT domain occupies 574–909 (NCAKLKQGIA…HCGSYGYTMA (336 aa)). Cys-876 functions as the Glycyl thioester intermediate in the catalytic mechanism.

In terms of assembly, homodimer. The homodimer is autoinhibited and stabilized by its N-terminal helix. Interacts with RAB1 (RAB1A, RAB1B or RAB1C), RAB4 (RAB4A or RAB4B) and RAB11 (RAB11A or RAB11B); in a GTP-dependent manner. Interacts with the 26S proteasomal complex through the 20S core proteasomal subunit. Interacts with RARB. Post-translationally, autoubiquitinated. Expressed in multiple tissues including heart, brain and kidney.

It localises to the golgi apparatus. Its subcellular location is the golgi stack membrane. It is found in the cytoplasm. The protein localises to the endoplasmic reticulum. The enzyme catalyses S-ubiquitinyl-[E2 ubiquitin-conjugating enzyme]-L-cysteine + [acceptor protein]-L-lysine = [E2 ubiquitin-conjugating enzyme]-L-cysteine + N(6)-ubiquitinyl-[acceptor protein]-L-lysine.. Its pathway is protein modification; protein ubiquitination. Sterically autoinhibited in its dimeric state. Its function is as follows. E3 ubiquitin-protein ligase involved in Golgi membrane fusion and regulation of small GTPases. Acts as a regulator of Golgi membrane dynamics during the cell cycle: recruited to Golgi membrane by Rab proteins and regulates postmitotic Golgi membrane fusion. Acts by mediating ubiquitination during mitotic Golgi disassembly, ubiquitination serving as a signal for Golgi reassembly later, after cell division. Specifically binds GTP-bound RAC1, mediating ubiquitination and subsequent degradation of active RAC1, thereby playing a role in host defense against pathogens. May also act as a transcription regulator via its interaction with RARB. The polypeptide is E3 ubiquitin-protein ligase HACE1 (HACE1) (Homo sapiens (Human)).